A 469-amino-acid polypeptide reads, in one-letter code: Cytochrome c biogenesis protein CcsB (469 aa).

A run of 3 helical transmembrane segments spans residues Leu30–Ile50, Thr89–Thr109, and Ile175–Ser195.

It belongs to the Ccs1/CcsB family. In terms of assembly, may interact with CcsA.

It localises to the cellular thylakoid membrane. In terms of biological role, required during biogenesis of c-type cytochromes (cytochrome c6 and cytochrome f) at the step of heme attachment. This is Cytochrome c biogenesis protein CcsB from Synechococcus sp. (strain JA-2-3B'a(2-13)) (Cyanobacteria bacterium Yellowstone B-Prime).